A 396-amino-acid polypeptide reads, in one-letter code: Alanine racemase (396 aa).

Lysine 46 functions as the Proton acceptor; specific for D-alanine in the catalytic mechanism. Lysine 46 is modified (N6-(pyridoxal phosphate)lysine). Arginine 145 is a substrate binding site. Tyrosine 280 (proton acceptor; specific for L-alanine) is an active-site residue. Position 328 (methionine 328) interacts with substrate.

The protein belongs to the alanine racemase family. The cofactor is pyridoxal 5'-phosphate.

The enzyme catalyses L-alanine = D-alanine. It functions in the pathway amino-acid biosynthesis; D-alanine biosynthesis; D-alanine from L-alanine: step 1/1. Catalyzes the interconversion of L-alanine and D-alanine. May also act on other amino acids. The chain is Alanine racemase (alr) from Brucella suis (strain ATCC 23445 / NCTC 10510).